Consider the following 54-residue polypeptide: ATP synthase protein 8 (54 aa).

The helical transmembrane segment at 8 to 28 threads the bilayer; sequence WWLLNFFLGWTSLLVIFIILL.

The protein belongs to the ATPase protein 8 family. As to quaternary structure, F-type ATPases have 2 components, CF(1) - the catalytic core - and CF(0) - the membrane proton channel.

It localises to the mitochondrion membrane. Its function is as follows. Mitochondrial membrane ATP synthase (F(1)F(0) ATP synthase or Complex V) produces ATP from ADP in the presence of a proton gradient across the membrane which is generated by electron transport complexes of the respiratory chain. F-type ATPases consist of two structural domains, F(1) - containing the extramembraneous catalytic core and F(0) - containing the membrane proton channel, linked together by a central stalk and a peripheral stalk. During catalysis, ATP synthesis in the catalytic domain of F(1) is coupled via a rotary mechanism of the central stalk subunits to proton translocation. Part of the complex F(0) domain. Minor subunit located with subunit a in the membrane. The chain is ATP synthase protein 8 (MT-ATP8) from Patiria pectinifera (Starfish).